The sequence spans 338 residues: Glycerol-3-phosphate dehydrogenase [NAD(P)+] 1 (338 aa).

Positions 11, 12, 32, 33, and 109 each coordinate NADPH. The sn-glycerol 3-phosphate site is built by Lys109, Gly140, and Ser142. Residue Ala144 participates in NADPH binding. Sn-glycerol 3-phosphate contacts are provided by Lys195, Asp248, Ser258, Arg259, and Asn260. Residue Lys195 is the Proton acceptor of the active site. Residue Arg259 participates in NADPH binding. Val283 and Glu285 together coordinate NADPH.

This sequence belongs to the NAD-dependent glycerol-3-phosphate dehydrogenase family.

The protein localises to the cytoplasm. It catalyses the reaction sn-glycerol 3-phosphate + NAD(+) = dihydroxyacetone phosphate + NADH + H(+). It carries out the reaction sn-glycerol 3-phosphate + NADP(+) = dihydroxyacetone phosphate + NADPH + H(+). It participates in membrane lipid metabolism; glycerophospholipid metabolism. Functionally, catalyzes the reduction of the glycolytic intermediate dihydroxyacetone phosphate (DHAP) to sn-glycerol 3-phosphate (G3P), the key precursor for phospholipid synthesis. This chain is Glycerol-3-phosphate dehydrogenase [NAD(P)+] 1, found in Lactobacillus delbrueckii subsp. bulgaricus (strain ATCC 11842 / DSM 20081 / BCRC 10696 / JCM 1002 / NBRC 13953 / NCIMB 11778 / NCTC 12712 / WDCM 00102 / Lb 14).